The primary structure comprises 164 residues: Single-stranded DNA-binding protein 2 (164 aa).

Positions 5–109 (INKVILVGNL…IVADEMQMLG (105 aa)) constitute an SSB domain. Positions 105–164 (MQMLGGRSDGGGMGGGGERPQRQTSQRQDYAPRRQARQPSQSPQSSPPPMDDFADDDIPF) are disordered. Residues 111 to 122 (RSDGGGMGGGGE) show a composition bias toward gly residues. Positions 159 to 164 (DDDIPF) match the Important for interaction with partner proteins motif.

Homotetramer.

In terms of biological role, plays an important role in DNA replication, recombination and repair. Binds to ssDNA and to an array of partner proteins to recruit them to their sites of action during DNA metabolism. This Xylella fastidiosa (strain 9a5c) protein is Single-stranded DNA-binding protein 2 (ssb2).